We begin with the raw amino-acid sequence, 588 residues long: Calcium/calmodulin-dependent protein kinase kinase 2 (588 aa).

Polar residues predominate over residues 1–11 (MSSCVSSQPTS). Disordered stretches follow at residues 1-34 (MSSCVSSQPTSDRVAPQDELGSGGGSREGQKPCE) and 64-147 (DLNL…PTVE). Residue S2 is modified to N-acetylserine. Phosphoserine occurs at positions 99, 114, 129, 133, and 137. Residues 101-116 (QEPSQGGPASSSNSLD) show a composition bias toward polar residues. Over residues 124-139 (PSLSYSPASSPQSSPR) the composition is skewed to low complexity. In terms of domain architecture, Protein kinase spans 165 to 446 (YTLKDEIGKG…VPEIKLHPWV (282 aa)). ATP-binding positions include 171 to 179 (IGKGSYGVV) and K194. The interval 204–226 (QAGFPRRPPPRGARPAPGGCIQP) is RP domain. A disordered region spans residues 205-225 (AGFPRRPPPRGARPAPGGCIQ). D312 serves as the catalytic Proton acceptor. Residues 472–477 (ENSVKH) are autoinhibitory domain. The interval 475–500 (VKHIPSLATVILVKTMIRKRSFGNPF) is calmodulin-binding. Phosphoserine is present on residues S495, S511, T522, and S572. A disordered region spans residues 497–588 (GNPFEGSRRE…LQPEEVMEPE (92 aa)). The span at 521-536 (PTREWEPLSEPKEARQ) shows a compositional bias: basic and acidic residues. Positions 570 to 580 (PGSPPRMPPLQ) are enriched in pro residues.

This sequence belongs to the protein kinase superfamily. Ser/Thr protein kinase family. As to quaternary structure, interacts with calmodulin. In terms of processing, autophosphorylated and phosphorylated by PKA. Each isoform may show a different pattern of phosphorylation. As to expression, expressed in all tissues tested. A differential expression pattern compared to CAMKK1 is observed in the brain.

It is found in the nucleus. It localises to the cytoplasm. The protein resides in the cell projection. Its subcellular location is the neuron projection. It catalyses the reaction L-seryl-[protein] + ATP = O-phospho-L-seryl-[protein] + ADP + H(+). The catalysed reaction is L-threonyl-[protein] + ATP = O-phospho-L-threonyl-[protein] + ADP + H(+). Its activity is regulated as follows. Activated by Ca(2+)/calmodulin. Binding of calmodulin may relieve intrasteric autoinhibition. Autophosphorylation does not alter activity or regulation by Ca(2+)/calmodulin. In part, activity is independent on Ca(2+)/calmodulin. Its function is as follows. Calcium/calmodulin-dependent protein kinase belonging to a proposed calcium-triggered signaling cascade involved in a number of cellular processes. Phosphorylates CAMK1, CAMK4 and CAMK1D. Efficiently phosphorylates 5'-AMP-activated protein kinase (AMPK) trimer, including that consisting of PRKAA1, PRKAB1 and PRKAG1. This phosphorylation is stimulated in response to Ca(2+) signals. May play a role in neurite growth. Isoform 2 may promote neurite elongation, while isoform 1 may promoter neurite branching. May be involved in hippocampal activation of CREB1. This is Calcium/calmodulin-dependent protein kinase kinase 2 (Camkk2) from Mus musculus (Mouse).